The chain runs to 458 residues: Probable M18 family aminopeptidase 1 (458 aa).

Zn(2+) contacts are provided by H95, H170, and H434.

The protein belongs to the peptidase M18 family. The cofactor is Zn(2+).

The sequence is that of Probable M18 family aminopeptidase 1 from Borrelia garinii subsp. bavariensis (strain ATCC BAA-2496 / DSM 23469 / PBi) (Borreliella bavariensis).